The primary structure comprises 228 residues: Ribonuclease 3 1 (228 aa).

Residues 1 to 124 (MYKLLMFRDD…VIGAYYLDNN (124 aa)) enclose the RNase III domain. Residue glutamate 37 coordinates Mg(2+). The active site involves aspartate 41. Residues serine 110 and glutamate 113 each coordinate Mg(2+). Glutamate 113 is a catalytic residue. Positions 153 to 223 (DSKNRFQEWV…AENALANLNK (71 aa)) constitute a DRBM domain.

It belongs to the ribonuclease III family. As to quaternary structure, homodimer. It depends on Mg(2+) as a cofactor.

It is found in the cytoplasm. It catalyses the reaction Endonucleolytic cleavage to 5'-phosphomonoester.. Functionally, digests double-stranded RNA. Involved in the processing of primary rRNA transcript to yield the immediate precursors to the large and small rRNAs (23S and 16S). Processes some mRNAs, and tRNAs when they are encoded in the rRNA operon. Processes pre-crRNA and tracrRNA of type II CRISPR loci if present in the organism. The chain is Ribonuclease 3 1 from Nostoc sp. (strain PCC 7120 / SAG 25.82 / UTEX 2576).